We begin with the raw amino-acid sequence, 513 residues long: Quiannulatic acid synthase (513 aa).

The helical transmembrane segment at valine 14–tyrosine 34 threads the bilayer. Asparagine 308 carries N-linked (GlcNAc...) asparagine glycosylation. Heme is bound at residue cysteine 477.

It belongs to the cytochrome P450 family. Requires heme as cofactor.

Its subcellular location is the membrane. It catalyses the reaction quiannulatene + 3 reduced [NADPH--hemoprotein reductase] + 3 O2 = quiannulatate + 3 oxidized [NADPH--hemoprotein reductase] + 4 H2O + 4 H(+). It participates in secondary metabolite biosynthesis; terpenoid biosynthesis. Functionally, cytochrome P450 monooxygenase; part of the gene cluster that mediates the biosynthesis of the pentacyclic sesterterpene quiannulatic acid. The first step of the pathway is performed by the sesterterpene synthase (QS) that possesses both prenyl transferase and terpene cyclase activity, converting isopentenyl diphosphate and dimethylallyl diphosphate into geranylfarnesyl diphosphate (GFPP) and further converting GFPP into quiannulatene via an unprecedented cyclization mode which involves three rounds of hydride shifts and two successive C-C bond migrations to construct the 5-6-5-5-5 fused ring. The cytochrome P450 monooxygenase Qnn-P450 then oxidizes quiannulatene at C-19 in 3 successive reactions to afford quiannulatic acid. The protein is Quiannulatic acid synthase of Emericella variicolor (Aspergillus stellatus).